The chain runs to 249 residues: MAALRVQPEAQAKVDVFREDLCTKTENLLGSYFPKKISELDAFLKEPALNEANLSNLKAPLDIPVPDPVKEKEKEERKKQQEKEDKDEKKKGEDEDKGPPCGPVNCNEKIVVLLQRLKPEIKDVIEQLNLVTTWLQLQIPRIEDGNNFGVAVQEKVFELMTALHTKLEGFHTQISKYFSERGDAVAKAAKQPHVGDYRQLVHELDEAEYRDIRLMVMEIRNAYAVLYDIILKNFEKLKKPRGETKGMIY.

The segment at 60–102 is disordered; that stretch reads PLDIPVPDPVKEKEKEERKKQQEKEDKDEKKKGEDEDKGPPCG. The span at 68-98 shows a compositional bias: basic and acidic residues; sequence PVKEKEKEERKKQQEKEDKDEKKKGEDEDKG.

This sequence belongs to the PA28 family. In terms of assembly, heterodimer of PSME1 and PSME2, which forms a hexameric ring. PSME1 can form homoheptamers.

Implicated in immunoproteasome assembly and required for efficient antigen processing. The PA28 activator complex enhances the generation of class I binding peptides by altering the cleavage pattern of the proteasome. This chain is Proteasome activator complex subunit 1 (PSME1), found in Sus scrofa (Pig).